Consider the following 394-residue polypeptide: Elongation factor Tu (394 aa).

The 195-residue stretch at 10–204 (KPHVNVGTIG…FLDSYIPEPE (195 aa)) folds into the tr-type G domain. Residues 19–26 (GHVDHGKT) are G1. GTP is bound at residue 19–26 (GHVDHGKT). Threonine 26 lines the Mg(2+) pocket. The tract at residues 60–64 (GITIN) is G2. The G3 stretch occupies residues 81-84 (DCPG). Residues 81–85 (DCPGH) and 136–139 (NKCD) contribute to the GTP site. The G4 stretch occupies residues 136 to 139 (NKCD). The G5 stretch occupies residues 174 to 176 (SAL).

It belongs to the TRAFAC class translation factor GTPase superfamily. Classic translation factor GTPase family. EF-Tu/EF-1A subfamily. In terms of assembly, monomer.

Its subcellular location is the cytoplasm. It carries out the reaction GTP + H2O = GDP + phosphate + H(+). In terms of biological role, GTP hydrolase that promotes the GTP-dependent binding of aminoacyl-tRNA to the A-site of ribosomes during protein biosynthesis. The polypeptide is Elongation factor Tu (Salmonella arizonae (strain ATCC BAA-731 / CDC346-86 / RSK2980)).